The chain runs to 621 residues: Complex I assembly factor ACAD9, mitochondrial (621 aa).

The transit peptide at 1–37 directs the protein to the mitochondrion; sequence MSGCGLFLRTTAAARACRGLVVSTANRRLLRTSPPVR. An N6-acetyllysine modification is found at Lys41. An N6-succinyllysine modification is found at Lys92. Glu426 (proton acceptor) is an active-site residue. Thr478 is subject to Phosphothreonine. Residue Lys521 is modified to N6-acetyllysine; alternate. Lys521 is subject to N6-succinyllysine; alternate.

This sequence belongs to the acyl-CoA dehydrogenase family. In terms of assembly, homodimer. Interacts with NDUFAF1 and ECSIT. Part of the mitochondrial complex I assembly/MCIA complex that comprises at least the core subunits TMEM126B, NDUFAF1, ECSIT and ACAD9 and complement subunits such as COA1 and TMEM186. Interacts with TMEM70 and TMEM242. FAD is required as a cofactor. Ubiquitously expressed in most normal human tissues and cancer cell lines with high level of expression in heart, skeletal muscles, brain, kidney and liver. In the cerebellum uniquely expressed in the granular layer (at protein level).

It is found in the mitochondrion inner membrane. The catalysed reaction is eicosanoyl-CoA + oxidized [electron-transfer flavoprotein] + H(+) = (2E)-eicosenoyl-CoA + reduced [electron-transfer flavoprotein]. It carries out the reaction octadecanoyl-CoA + oxidized [electron-transfer flavoprotein] + H(+) = (2E)-octadecenoyl-CoA + reduced [electron-transfer flavoprotein]. The enzyme catalyses oxidized [electron-transfer flavoprotein] + hexadecanoyl-CoA + H(+) = (2E)-hexadecenoyl-CoA + reduced [electron-transfer flavoprotein]. It catalyses the reaction decanoyl-CoA + oxidized [electron-transfer flavoprotein] + H(+) = (2E)-decenoyl-CoA + reduced [electron-transfer flavoprotein]. The catalysed reaction is nonanoyl-CoA + oxidized [electron-transfer flavoprotein] + H(+) = (2E)-nonenoyl-CoA + reduced [electron-transfer flavoprotein]. It carries out the reaction pentadecanoyl-CoA + oxidized [electron-transfer flavoprotein] + H(+) = (2E)-pentadecenoyl-CoA + reduced [electron-transfer flavoprotein]. The enzyme catalyses undecanoyl-CoA + oxidized [electron-transfer flavoprotein] + H(+) = trans-2-undecenoyl-CoA + reduced [electron-transfer flavoprotein]. It catalyses the reaction (9Z)-hexadecenoyl-CoA + oxidized [electron-transfer flavoprotein] + H(+) = (2E,9Z)-hexadecadienoyl-CoA + reduced [electron-transfer flavoprotein]. The catalysed reaction is heptadecanoyl-CoA + oxidized [electron-transfer flavoprotein] + H(+) = trans-2-heptadecenoyl-CoA + reduced [electron-transfer flavoprotein]. It carries out the reaction (9E)-octadecenoyl-CoA + oxidized [electron-transfer flavoprotein] + H(+) = (2E,9E)-octadecadienoyl-CoA + reduced [electron-transfer flavoprotein]. The enzyme catalyses oxidized [electron-transfer flavoprotein] + (9Z)-octadecenoyl-CoA + H(+) = (2E,9Z)-octadecadienoyl-CoA + reduced [electron-transfer flavoprotein]. It catalyses the reaction (9Z,12Z)-octadecadienoyl-CoA + oxidized [electron-transfer flavoprotein] + H(+) = (2E,9Z,12Z)-octadecatrienoyl-CoA + reduced [electron-transfer flavoprotein]. The catalysed reaction is (4Z,7Z,10Z,13Z,16Z,19Z)-docosahexaenoyl-CoA + oxidized [electron-transfer flavoprotein] + H(+) = (2E,4Z,7Z,10Z,13Z,16Z,19Z)-docosaheptaenoyl-CoA + reduced [electron-transfer flavoprotein]. It carries out the reaction tetradecanoyl-CoA + oxidized [electron-transfer flavoprotein] + H(+) = (2E)-tetradecenoyl-CoA + reduced [electron-transfer flavoprotein]. Functionally, as part of the MCIA complex, primarily participates in the assembly of the mitochondrial complex I and therefore plays a role in oxidative phosphorylation. This moonlighting protein also has a dehydrogenase activity toward a broad range of substrates with greater specificity for long-chain unsaturated acyl-CoAs. However, in vivo, it does not seem to play a primary role in fatty acid oxidation. In addition, the function in complex I assembly is independent of the dehydrogenase activity of the protein. The protein is Complex I assembly factor ACAD9, mitochondrial of Homo sapiens (Human).